Consider the following 349-residue polypeptide: Selenide, water dikinase (349 aa).

The active site involves Cys17. ATP contacts are provided by residues Lys20 and 48–50; that span reads MAD. Mg(2+) is bound at residue Asp51. Residues Asp68, Asp91, and 139–141 contribute to the ATP site; that span reads GHS. Asp91 serves as a coordination point for Mg(2+). Asp227 contributes to the Mg(2+) binding site.

This sequence belongs to the selenophosphate synthase 1 family. Class I subfamily. In terms of assembly, homodimer. Mg(2+) is required as a cofactor.

It carries out the reaction hydrogenselenide + ATP + H2O = selenophosphate + AMP + phosphate + 2 H(+). In terms of biological role, synthesizes selenophosphate from selenide and ATP. This chain is Selenide, water dikinase, found in Rhizobium meliloti (strain 1021) (Ensifer meliloti).